A 108-amino-acid polypeptide reads, in one-letter code: UPF0060 membrane protein YnfA (108 aa).

Topologically, residues Met1–Thr5 are periplasmic. Residues Leu6 to Leu26 form a helical membrane-spanning segment. Topologically, residues Lys27 to Ala30 are cytoplasmic. A helical membrane pass occupies residues Ser31 to Leu51. Over His52 to Tyr60 the chain is Periplasmic. A helical membrane pass occupies residues Ala61–Val81. Residues Arg82–Thr84 lie on the Cytoplasmic side of the membrane. The helical transmembrane segment at Val85–Trp105 threads the bilayer. Topologically, residues Gly106 to Thr108 are periplasmic.

The protein belongs to the UPF0060 family.

The protein resides in the cell inner membrane. The protein is UPF0060 membrane protein YnfA of Salmonella agona (strain SL483).